The chain runs to 329 residues: Beta-ribofuranosylphenol 5'-phosphate synthase (329 aa).

It belongs to the beta-RFA-P synthase family. As to quaternary structure, homodimer. It depends on Mg(2+) as a cofactor.

The enzyme catalyses 5-phospho-alpha-D-ribose 1-diphosphate + 4-hydroxybenzoate + H(+) = 4-(beta-D-ribofuranosyl)phenol 5'-phosphate + CO2 + diphosphate. It catalyses the reaction 4-aminobenzoate + 5-phospho-alpha-D-ribose 1-diphosphate + H(+) = 4-(beta-D-ribofuranosyl)aminobenzene 5'-phosphate + CO2 + diphosphate. It participates in cofactor biosynthesis; 5,6,7,8-tetrahydromethanopterin biosynthesis. Functionally, catalyzes the condensation of 4-hydroxybenzoate (HB) with 5-phospho-alpha-D-ribose 1-diphosphate (PRPP) to produce beta-ribofuranosylphenol 5'-phosphate (beta-RFH-P). Also catalyzes the condensation of 4-aminobenzoate (pABA) with PRPP to produce beta-ribofuranosylaminobenzene 5'-phosphate (beta-RFA-P). Only 4-hydroxybenzoate is known to be biosynthesized by methanogenic archaea, but 4-aminobenzoate can be used as substrate by growing methanogens when it is present in the growth medium. The chain is Beta-ribofuranosylphenol 5'-phosphate synthase from Methanothermobacter thermautotrophicus (strain ATCC 29096 / DSM 1053 / JCM 10044 / NBRC 100330 / Delta H) (Methanobacterium thermoautotrophicum).